Reading from the N-terminus, the 367-residue chain is Chorismate synthase (367 aa).

Residue arginine 48 participates in NADP(+) binding. FMN-binding positions include 125-127 (RSS), 243-244 (NA), glycine 283, 298-302 (KPTSS), and arginine 324.

This sequence belongs to the chorismate synthase family. In terms of assembly, homotetramer. Requires FMNH2 as cofactor.

It carries out the reaction 5-O-(1-carboxyvinyl)-3-phosphoshikimate = chorismate + phosphate. Its pathway is metabolic intermediate biosynthesis; chorismate biosynthesis; chorismate from D-erythrose 4-phosphate and phosphoenolpyruvate: step 7/7. Functionally, catalyzes the anti-1,4-elimination of the C-3 phosphate and the C-6 proR hydrogen from 5-enolpyruvylshikimate-3-phosphate (EPSP) to yield chorismate, which is the branch point compound that serves as the starting substrate for the three terminal pathways of aromatic amino acid biosynthesis. This reaction introduces a second double bond into the aromatic ring system. This Psychrobacter cryohalolentis (strain ATCC BAA-1226 / DSM 17306 / VKM B-2378 / K5) protein is Chorismate synthase.